Consider the following 902-residue polypeptide: Viral-enhancing factor (902 aa).

Positions 27-330 (HRRTEVGVVL…IFAWLYNPQR (304 aa)) constitute a Peptidase M60 domain. 10 N-linked (GlcNAc...) asparagine; by host glycosylation sites follow: N73, N265, N278, N339, N540, N593, N594, N620, N782, and N840.

Involved in disruption of the peritrophic membrane and fusion of nucleocapsids with midgut cells. The polypeptide is Viral-enhancing factor (VEF) (Heliothis (HaGV)).